Reading from the N-terminus, the 361-residue chain is Microtubule-associated protein Jupiter (361 aa).

A compositionally biased stretch (polar residues) spans 1 to 15 (MISNYDITDSKSSSK). Disordered regions lie at residues 1–38 (MISN…TPRN) and 70–99 (IGDN…TPGK). S24 bears the Phosphoserine mark. T35 bears the Phosphothreonine mark. Positions 73 to 87 (NPRRGQKPVDSHSRL) are enriched in basic and acidic residues. T96 is subject to Phosphothreonine. S105 carries the post-translational modification Phosphoserine. 2 stretches are compositionally biased toward low complexity: residues 125 to 134 (GSSTANTTNG) and 141 to 154 (SGSV…VSSS). Disordered regions lie at residues 125-165 (GSST…SGSR) and 328-361 (GSTN…SGLW). S143 and S154 each carry phosphoserine. Residues 155–165 (TENLKMNSGSR) are compositionally biased toward polar residues.

Belongs to the MAP Jupiter family.

It is found in the nucleus. Its subcellular location is the cytoplasm. The protein localises to the cytoskeleton. It localises to the spindle. Binds to all microtubule populations. This chain is Microtubule-associated protein Jupiter, found in Drosophila persimilis (Fruit fly).